We begin with the raw amino-acid sequence, 588 residues long: Pre-mRNA 3'-end-processing factor FIP1 (588 aa).

A compositionally biased stretch (basic and acidic residues) spans 1 to 10; sequence MSAGEVERLV. 3 disordered regions span residues 1–81, 223–291, and 334–588; these read MSAG…EDDV, QGRT…ESPD, and VDNN…TPAE. Residues 1-96 are sufficient for interaction with PAPOLA; that stretch reads MSAGEVERLV…DIKTGAPQYG (96 aa). A necessary for stimulating PAPOLA activity region spans residues 1 to 341; the sequence is MSAGEVERLV…TAVDNNFSKP (341 aa). Composition is skewed to acidic residues over residues 19–40 and 66–80; these read GDEE…EEEN and TEDD…DEDD. S70, S72, and S74 each carry phosphoserine. The segment at 122-228 is sufficient for interaction with CPSF4; the sequence is KGVDLDAPGS…FKVQQGRTGN (107 aa). Residues 259 to 270 are compositionally biased toward low complexity; sequence STSSQSQTSTAS. Residues 280–291 show a composition bias toward basic and acidic residues; that stretch reads WQDRYGRAESPD. The residue at position 289 (S289) is a Phosphoserine. Residues 340–398 are compositionally biased toward pro residues; sequence KPPPFFPPGAPPTHLPPPPFLPPPPTVSTAPPLIPPPGIPITVPPPGFPPPPGAPPPSL. Y420 bears the Phosphotyrosine mark. The segment at 437-588 is sufficient for interaction with CPSF1 and CSTF3; it reads SLVDTSKQWD…QESTEATPAE (152 aa). The segment covering 448–486 has biased composition (basic and acidic residues); that stretch reads YARREKDRDRERDRDRERDRDRDRERERTRERERERDHS. Residues 451-484 form an arg/Asp/Glu-rich domain region; that stretch reads REKDRDRERDRDRERDRDRDRERERTRERERERD. A Phosphoserine modification is found at S486. T488 is modified (phosphothreonine). S490 and S494 each carry phosphoserine. Residues 495 to 522 are compositionally biased toward basic and acidic residues; it reads DEERYRYREYAERGYERHRASREKEERH. The segment covering 536 to 545 has biased composition (basic residues); sequence KSSRSNSRRR. A Phosphoserine modification is found at S548. Over residues 554–564 the composition is skewed to basic residues; the sequence is HRRHKHKKSKR.

The protein belongs to the FIP1 family. Component of the cleavage and polyadenylation specificity factor (CPSF) complex, composed of CPSF1, CPSF2, CPSF3, CPSF4 and FIP1L1. Found in a complex with CPSF1, FIP1L1 and PAPOLA. Interacts with CPSF1, CPSF4, CSTF2 and CSTF3. Interacts with AHCYL1 (when phosphorylated); the interaction is direct and associates AHCYL1 with the CPSF complex and RNA. Interacts with PAPOLA; the interaction seems to be increased by the interaction with AHCYL1. Interacts with NUDT21/CPSF5; this interaction occurs in a RNA sequence-specific manner. Interacts (preferentially via unphosphorylated form and Arg/Glu/Asp-rich domain) with CPSF6 (via Arg/Ser-rich domain); this interaction mediates, at least in part, the interaction between the CFIm and CPSF complexes and may be inhibited by CPSF6 hyper-phosphorylation. Interacts (preferentially via unphosphorylated form and Arg/Asp/Glu-rich domain) with CPSF7 (via Arg/Ser-rich domain); this interaction mediates, at least in part, the interaction between the CFIm and CPSF complexes and may be inhibited by CPSF7 hyper-phosphorylation.

It localises to the nucleus. Its function is as follows. Component of the cleavage and polyadenylation specificity factor (CPSF) complex that plays a key role in pre-mRNA 3'-end formation, recognizing the AAUAAA signal sequence and interacting with poly(A) polymerase and other factors to bring about cleavage and poly(A) addition. FIP1L1 contributes to poly(A) site recognition and stimulates poly(A) addition. Binds to U-rich RNA sequence elements surrounding the poly(A) site. May act to tether poly(A) polymerase to the CPSF complex. The chain is Pre-mRNA 3'-end-processing factor FIP1 (FIP1L1) from Pongo abelii (Sumatran orangutan).